The sequence spans 401 residues: Enolase (401 aa).

Gln154 serves as a coordination point for (2R)-2-phosphoglycerate. Glu196 functions as the Proton donor in the catalytic mechanism. Mg(2+) is bound by residues Asp232, Glu275, and Asp302. (2R)-2-phosphoglycerate is bound by residues Lys327, Arg356, Ser357, and Lys378. Catalysis depends on Lys327, which acts as the Proton acceptor.

The protein belongs to the enolase family. Requires Mg(2+) as cofactor.

The protein localises to the cytoplasm. It is found in the secreted. Its subcellular location is the cell surface. It carries out the reaction (2R)-2-phosphoglycerate = phosphoenolpyruvate + H2O. The protein operates within carbohydrate degradation; glycolysis; pyruvate from D-glyceraldehyde 3-phosphate: step 4/5. In terms of biological role, catalyzes the reversible conversion of 2-phosphoglycerate (2-PG) into phosphoenolpyruvate (PEP). It is essential for the degradation of carbohydrates via glycolysis. The sequence is that of Enolase from Haloarcula marismortui (strain ATCC 43049 / DSM 3752 / JCM 8966 / VKM B-1809) (Halobacterium marismortui).